Here is a 92-residue protein sequence, read N- to C-terminus: MGSLRLSTVAIAVVVCLSILLISPTEVDGRQVCDYDKGECNSYEKSSTCIEPCKQLDSKFIGGRCIPVGGITGMGLCVCCRDVQRGAEKESM.

Positions 1-29 (MGSLRLSTVAIAVVVCLSILLISPTEVDG) are cleaved as a signal peptide. Disulfide bonds link cysteine 33–cysteine 80, cysteine 40–cysteine 65, cysteine 49–cysteine 77, and cysteine 53–cysteine 79.

Belongs to the DEFL family.

The protein localises to the secreted. The polypeptide is Defensin-like protein 96 (Arabidopsis thaliana (Mouse-ear cress)).